A 156-amino-acid chain; its full sequence is Deoxyuridine 5'-triphosphate nucleotidohydrolase (156 aa).

Substrate is bound by residues 76 to 78, Asn-89, 93 to 95, and Lys-103; these read RSG and TVD.

The protein belongs to the dUTPase family. The cofactor is Mg(2+).

It catalyses the reaction dUTP + H2O = dUMP + diphosphate + H(+). It functions in the pathway pyrimidine metabolism; dUMP biosynthesis; dUMP from dCTP (dUTP route): step 2/2. Its function is as follows. This enzyme is involved in nucleotide metabolism: it produces dUMP, the immediate precursor of thymidine nucleotides and it decreases the intracellular concentration of dUTP so that uracil cannot be incorporated into DNA. In Rhizobium rhizogenes (strain K84 / ATCC BAA-868) (Agrobacterium radiobacter), this protein is Deoxyuridine 5'-triphosphate nucleotidohydrolase.